The primary structure comprises 214 residues: Probable nicotinate-nucleotide adenylyltransferase (214 aa).

The protein belongs to the NadD family.

The catalysed reaction is nicotinate beta-D-ribonucleotide + ATP + H(+) = deamido-NAD(+) + diphosphate. It participates in cofactor biosynthesis; NAD(+) biosynthesis; deamido-NAD(+) from nicotinate D-ribonucleotide: step 1/1. Catalyzes the reversible adenylation of nicotinate mononucleotide (NaMN) to nicotinic acid adenine dinucleotide (NaAD). In Pseudomonas paraeruginosa (strain DSM 24068 / PA7) (Pseudomonas aeruginosa (strain PA7)), this protein is Probable nicotinate-nucleotide adenylyltransferase.